Here is a 227-residue protein sequence, read N- to C-terminus: UPF0758 protein PG_0894 (227 aa).

In terms of domain architecture, MPN spans 104–227 (SITDSRMAYR…YFSFADEGLL (124 aa)). The Zn(2+) site is built by histidine 175, histidine 177, and aspartate 188. A JAMM motif motif is present at residues 175-188 (HNHPSGTVRPSEQD).

It belongs to the UPF0758 family.

The chain is UPF0758 protein PG_0894 from Porphyromonas gingivalis (strain ATCC BAA-308 / W83).